A 427-amino-acid polypeptide reads, in one-letter code: MAATDVERASNEEKRSLALSGHVGFDSLPDQLVGKSVTQGFCFNILCVGETGIGKSTLMNTLFNTTFETEEASHYENGVRLRPRTYELQESNVHLKLTIVDTVGFGDQINKDDSYRSVVDYIDTQFETYLQEELKIRRSLFNYHDSRIHVCLYFITPTGHSLKSLDLVAMKKLDSKVNIIPIIAKADTISKSELHKFKIKIMSELVSNGVQIYQFPTDDDAVAEINSVMNAHLPFAVVGSTEEVKVGNKLVRARQYPWGVVQVENESHCDFVKLREMLIRVNMEDLREQTHTRHYELYRRCKLEEMGFKDNDPDTQPFSLQETYEAKRKEFLSELQKKEEEMRQMFVNKVKETESELKERERELQEKFMQLKRIHQEESKKVEDKRRDLEEEMNAFNRRKVAMETLQSQSFQATSQQPLKKDKDRKN.

One can recognise a Septin-type G domain in the interval 39 to 305; that stretch reads QGFCFNILCV…ELYRRCKLEE (267 aa). The G1 motif stretch occupies residues 49-56; it reads GETGIGKS. GTP-binding positions include 49 to 56, glycine 104, 185 to 193, glycine 239, and arginine 254; these read GETGIGKS and KADTISKSE. The segment at 101–104 is G3 motif; sequence DTVG. The segment at 184-187 is G4 motif; sequence AKAD. Positions 320–407 form a coiled coil; it reads LQETYEAKRK…RRKVAMETLQ (88 aa). The segment covering 406 to 418 has biased composition (polar residues); that stretch reads LQSQSFQATSQQP. Residues 406–427 are disordered; it reads LQSQSFQATSQQPLKKDKDRKN.

The protein belongs to the TRAFAC class TrmE-Era-EngA-EngB-Septin-like GTPase superfamily. Septin GTPase family.

This Xenopus laevis (African clawed frog) protein is Septin-8-B (sept8-b).